The following is a 439-amino-acid chain: L-tryptophan decarboxylase (439 aa).

Belongs to the phosphatidylserine decarboxylase family.

It carries out the reaction L-tryptophan + H(+) = tryptamine + CO2. It participates in secondary metabolite biosynthesis. Functionally, L-tryptophan decarboxylase; part of the gene cluster that mediates the biosynthesis of psilocybin, a psychotropic tryptamine-derived natural product. The first step in the pathway is the decarboxylation of L-tryptophan to tryptamine by the decarboxylase psiD. 4-hydroxy-L-tryptophan is accepted as substrate by psiD as well. The cytochrome P450 monooxygenase psiH then converts tryptamine to 4-hydroxytryptamine. The kinase psiK catalyzes the 4-O-phosphorylation step by converting 4-hydroxytryptamine into norbaeocystin. The methyltransferase psiM then catalyzes iterative methyl transfer to the amino group of norbaeocystin to yield psilocybin via a monomethylated intermediate, baeocystin. 4-hydroxy-6-methyl-l-tryptophancan also be converted the decarboxylase PsiD, kinase PsiK, and methyltransferase PsiM into respectively 6-methyl-norbaeocystin, 6-methylbaeocystin, and 6-methylpsilocybin. This is L-tryptophan decarboxylase from Psilocybe cubensis (Psychedelic mushroom).